A 288-amino-acid polypeptide reads, in one-letter code: B3 domain-containing protein At2g35310 (288 aa).

2 DNA-binding regions (TF-B3) span residues 19-114 (FFKV…FMQD) and 196-288 (AEFS…VSKP).

It localises to the nucleus. In Arabidopsis thaliana (Mouse-ear cress), this protein is B3 domain-containing protein At2g35310.